A 345-amino-acid chain; its full sequence is Phenylalanine--tRNA ligase alpha subunit (345 aa).

E266 serves as a coordination point for Mg(2+).

It belongs to the class-II aminoacyl-tRNA synthetase family. Phe-tRNA synthetase alpha subunit type 1 subfamily. As to quaternary structure, tetramer of two alpha and two beta subunits. It depends on Mg(2+) as a cofactor.

It localises to the cytoplasm. The enzyme catalyses tRNA(Phe) + L-phenylalanine + ATP = L-phenylalanyl-tRNA(Phe) + AMP + diphosphate + H(+). The polypeptide is Phenylalanine--tRNA ligase alpha subunit (Burkholderia lata (strain ATCC 17760 / DSM 23089 / LMG 22485 / NCIMB 9086 / R18194 / 383)).